Here is a 237-residue protein sequence, read N- to C-terminus: Probable GTP-binding protein EngB (237 aa).

The 187-residue stretch at 23–209 folds into the EngB-type G domain; sequence AVPEVAFAGR…QAVIAGWLNL (187 aa). GTP contacts are provided by residues 31-38, 58-62, 82-85, 149-152, and 187-190; these read GRSNAGKS, GRTQH, DLPG, TKAD, and LFSS. Mg(2+)-binding residues include S38 and T60. The segment at 214-237 is disordered; sequence KAEREPAAANSVPPAVPPASDPAA. A compositionally biased stretch (pro residues) spans 227–237; that stretch reads PAVPPASDPAA.

Belongs to the TRAFAC class TrmE-Era-EngA-EngB-Septin-like GTPase superfamily. EngB GTPase family. Mg(2+) is required as a cofactor.

Necessary for normal cell division and for the maintenance of normal septation. In Cupriavidus taiwanensis (strain DSM 17343 / BCRC 17206 / CCUG 44338 / CIP 107171 / LMG 19424 / R1) (Ralstonia taiwanensis (strain LMG 19424)), this protein is Probable GTP-binding protein EngB.